The following is a 178-amino-acid chain: Large ribosomal subunit protein uL6 (178 aa).

It belongs to the universal ribosomal protein uL6 family. As to quaternary structure, part of the 50S ribosomal subunit.

Its function is as follows. This protein binds to the 23S rRNA, and is important in its secondary structure. It is located near the subunit interface in the base of the L7/L12 stalk, and near the tRNA binding site of the peptidyltransferase center. This is Large ribosomal subunit protein uL6 from Campylobacter jejuni subsp. doylei (strain ATCC BAA-1458 / RM4099 / 269.97).